A 273-amino-acid polypeptide reads, in one-letter code: Small ribosomal subunit protein uS2 (273 aa).

Residues 244 to 273 (SDEEANSSAEENENRQEDLLAKKYDSSEAN) are disordered. Residues 255-273 (NENRQEDLLAKKYDSSEAN) are compositionally biased toward basic and acidic residues.

Belongs to the universal ribosomal protein uS2 family.

In Chlamydia felis (strain Fe/C-56) (Chlamydophila felis), this protein is Small ribosomal subunit protein uS2.